Reading from the N-terminus, the 68-residue chain is Alpha/kappa-conotoxin-like pl14.2 (68 aa).

An N-terminal signal peptide occupies residues 1 to 27; that stretch reads MPSVRSVTCCCLLWMMFSVQLVTPGSP. Residues 28-39 constitute a propeptide that is removed on maturation; sequence ATAQLSGQRTAR. 2 disulfide bridges follow: Cys-46-Cys-61 and Cys-50-Cys-63. Arginine amide is present on Arg-64. Positions 65 to 68 are excised as a propeptide; it reads GKRD.

The protein belongs to the conotoxin J superfamily. Expressed by the venom duct.

The protein resides in the secreted. Functionally, highly inhibits both nicotinic acetylcholine receptors (neuronal (alpha-3/beta-4) and muscular (alpha-1/beta-1/epsilon/delta) subtypes) and the voltage-gated potassium channel Kv1.6/KCNA6 subtype. This is Alpha/kappa-conotoxin-like pl14.2 from Conus planorbis (Planorbis cone).